Consider the following 130-residue polypeptide: Ribosome-binding factor A (130 aa).

Belongs to the RbfA family. In terms of assembly, monomer. Binds 30S ribosomal subunits, but not 50S ribosomal subunits or 70S ribosomes.

It is found in the cytoplasm. Functionally, one of several proteins that assist in the late maturation steps of the functional core of the 30S ribosomal subunit. Associates with free 30S ribosomal subunits (but not with 30S subunits that are part of 70S ribosomes or polysomes). Required for efficient processing of 16S rRNA. May interact with the 5'-terminal helix region of 16S rRNA. The chain is Ribosome-binding factor A from Pseudomonas aeruginosa (strain LESB58).